The sequence spans 267 residues: Integral membrane protein 2C (267 aa).

Residue Thr37 is modified to Phosphothreonine. A helical; Signal-anchor for type II membrane protein membrane pass occupies residues 55-75; that stretch reads VGGVCYLSMGMVVLLMGLVFA. The BRICHOS domain maps to 136–230; the sequence is FGGGDPADII…LCNGKDTYRL (95 aa). Cys163 and Cys222 are disulfide-bonded. Asn169 is a glycosylation site (N-linked (GlcNAc...) asparagine).

This sequence belongs to the ITM2 family. As to quaternary structure, interacts with BACE1. Interacts with APP. Interacts with STMN2. Post-translationally, type I membrane-bound, as well as soluble, furin has a pre-eminent role in ITM2C proteolytic processing. PCSK7 and PCSK5 may also be involved although to a lesser extent. The soluble form of PCSK7 is incapable of processing ITM2C. Fails to undergo shedding by ADAM10 and intramembrane cleavage by SPPL2B. In terms of tissue distribution, high levels in the brain, specifically in the cerebral cortex, medulla, amygdala, hippocampus, thalamus, caudate nucleus, cerebellum, olfactory lobe and spinal cord. Very low levels in other organs.

Its subcellular location is the lysosome membrane. It is found in the cell membrane. Negative regulator of amyloid-beta peptide production. May inhibit the processing of APP by blocking its access to alpha- and beta-secretase. Binding to the beta-secretase-cleaved APP C-terminal fragment is negligible, suggesting that ITM2C is a poor gamma-secretase cleavage inhibitor. May play a role in TNF-induced cell death and neuronal differentiation. This Homo sapiens (Human) protein is Integral membrane protein 2C (ITM2C).